We begin with the raw amino-acid sequence, 103 residues long: Turripeptide OL55-like (103 aa).

Post-translationally, contains 8 disulfide bonds. Expressed by the venom duct.

The protein resides in the secreted. Acts as a neurotoxin by inhibiting an ion channel. The protein is Turripeptide OL55-like of Lophiotoma albina (Sea snail).